The following is a 213-amino-acid chain: Phosphoribosyl-dephospho-CoA transferase (213 aa).

Catalysis depends on residues Asp-135 and Asp-137.

The protein belongs to the MdcG family.

The catalysed reaction is apo-[malonate decarboxylase ACP] + 2'-(5''-triphospho-alpha-D-ribosyl)-3'-dephospho-CoA = holo-[malonate decarboxylase ACP] + diphosphate. In terms of biological role, transfers 2'-(5-triphosphoribosyl)-3'-dephosphocoenzyme-A to the apo-[acyl-carrier-protein] of the malonate decarboxylase to yield holo-[acyl-carrier-protein]. The sequence is that of Phosphoribosyl-dephospho-CoA transferase from Xanthomonas axonopodis pv. citri (strain 306).